The primary structure comprises 224 residues: Testis-expressed protein 30 (224 aa).

This Bos taurus (Bovine) protein is Testis-expressed protein 30 (TEX30).